Consider the following 389-residue polypeptide: Vacuolar protein sorting-associated protein vts1 (389 aa).

A disordered region spans residues 149–335; sequence NPQRKAKTPS…RPSQPTKASP (187 aa). Composition is skewed to polar residues over residues 156–177, 184–219, and 227–282; these read TPSN…TLPT, TNAS…SSEP, and SLSS…PESK. Residues 294 to 306 show a composition bias toward low complexity; that stretch reads TSITTTSTSIDPS. Over residues 308 to 334 the composition is skewed to polar residues; that stretch reads AFSSKSTLATTRTNAPLSRPSQPTKAS.

Belongs to the VTA1 family. Homodimer (in cytoplasm).

The protein resides in the cytoplasm. Its subcellular location is the endosome membrane. Has a role in the formation of the multivesicular body (MVB). Required for the sorting of lipids to form intralumenal vesicles and for fluid-phase transport to the vacuole. Required for sorting several plasma membrane proteins into the MVB. This is Vacuolar protein sorting-associated protein vts1 (vts1) from Schizosaccharomyces pombe (strain 972 / ATCC 24843) (Fission yeast).